The sequence spans 222 residues: UPF0128 protein PF1488 (222 aa).

Belongs to the UPF0128 family.

This chain is UPF0128 protein PF1488, found in Pyrococcus furiosus (strain ATCC 43587 / DSM 3638 / JCM 8422 / Vc1).